A 273-amino-acid chain; its full sequence is Undecaprenyl-diphosphatase (273 aa).

8 consecutive transmembrane segments (helical) span residues 13–35, 45–65, 90–110, 116–136, 157–177, 190–210, 222–242, and 252–272; these read LGVVEGLTEFLPVSSTGHMIIVG, ANTFEVVIQLGSILAVVVMFW, LSLIHILLGMIPAVVMGLIFH, LFNPVNVMYALIVGGVLLIAA, AFVIGCFQCLALWPGFSRSGA, YAASEFSFLLAVPMMMGATVL, GDVPMFAVGFVMAFIVALIAI, and ISFIPFAIYRFIVAAAVYVVF.

The protein belongs to the UppP family.

The protein localises to the cell inner membrane. It catalyses the reaction di-trans,octa-cis-undecaprenyl diphosphate + H2O = di-trans,octa-cis-undecaprenyl phosphate + phosphate + H(+). In terms of biological role, catalyzes the dephosphorylation of undecaprenyl diphosphate (UPP). Confers resistance to bacitracin. The sequence is that of Undecaprenyl-diphosphatase from Klebsiella pneumoniae subsp. pneumoniae (strain ATCC 700721 / MGH 78578).